Reading from the N-terminus, the 335-residue chain is Acetyl-coenzyme A carboxylase carboxyl transferase subunit alpha (335 aa).

Residues 40–294 form the CoA carboxyltransferase C-terminal domain; that stretch reads QLETLATRRR…KEAIEKHLDT (255 aa).

It belongs to the AccA family. In terms of assembly, acetyl-CoA carboxylase is a heterohexamer composed of biotin carboxyl carrier protein (AccB), biotin carboxylase (AccC) and two subunits each of ACCase subunit alpha (AccA) and ACCase subunit beta (AccD).

Its subcellular location is the cytoplasm. The enzyme catalyses N(6)-carboxybiotinyl-L-lysyl-[protein] + acetyl-CoA = N(6)-biotinyl-L-lysyl-[protein] + malonyl-CoA. It participates in lipid metabolism; malonyl-CoA biosynthesis; malonyl-CoA from acetyl-CoA: step 1/1. In terms of biological role, component of the acetyl coenzyme A carboxylase (ACC) complex. First, biotin carboxylase catalyzes the carboxylation of biotin on its carrier protein (BCCP) and then the CO(2) group is transferred by the carboxyltransferase to acetyl-CoA to form malonyl-CoA. The protein is Acetyl-coenzyme A carboxylase carboxyl transferase subunit alpha of Prochlorococcus marinus (strain MIT 9312).